We begin with the raw amino-acid sequence, 154 residues long: U1 small nuclear ribonucleoprotein C (154 aa).

Residues 4–36 form a Matrin-type zinc finger; it reads YYCDYCDTYLTHDSPSVRKTHCTGRKHKDNVKF.

Belongs to the U1 small nuclear ribonucleoprotein C family. As to quaternary structure, U1 snRNP is composed of the 7 core Sm proteins B/B', D1, D2, D3, E, F and G that assemble in a heptameric protein ring on the Sm site of the small nuclear RNA to form the core snRNP, and at least 3 U1 snRNP-specific proteins U1-70K, U1-A and U1-C. U1-C interacts with U1 snRNA and the 5' splice-site region of the pre-mRNA.

It localises to the nucleus. Functionally, component of the spliceosomal U1 snRNP, which is essential for recognition of the pre-mRNA 5' splice-site and the subsequent assembly of the spliceosome. U1-C is directly involved in initial 5' splice-site recognition for both constitutive and regulated alternative splicing. The interaction with the 5' splice-site seems to precede base-pairing between the pre-mRNA and the U1 snRNA. Stimulates commitment or early (E) complex formation by stabilizing the base pairing of the 5' end of the U1 snRNA and the 5' splice-site region. This chain is U1 small nuclear ribonucleoprotein C, found in Aedes aegypti (Yellowfever mosquito).